The primary structure comprises 87 residues: Large ribosomal subunit protein bL27 (87 aa).

The tract at residues 1–20 is disordered; it reads MAHKKAGGSSRNGRDSESKR.

Belongs to the bacterial ribosomal protein bL27 family.

This is Large ribosomal subunit protein bL27 from Thiobacillus denitrificans (strain ATCC 25259 / T1).